The following is a 372-amino-acid chain: Glutamate 5-kinase (372 aa).

K9 contributes to the ATP binding site. S49, D136, and N148 together coordinate substrate. ATP-binding positions include 168 to 169 and 210 to 216; these read TD and TGGMKSK. A PUA domain is found at 276–353; that stretch reads AGSIEIDSGA…EEALSLTKRS (78 aa).

The protein belongs to the glutamate 5-kinase family.

The protein resides in the cytoplasm. It carries out the reaction L-glutamate + ATP = L-glutamyl 5-phosphate + ADP. Its pathway is amino-acid biosynthesis; L-proline biosynthesis; L-glutamate 5-semialdehyde from L-glutamate: step 1/2. In terms of biological role, catalyzes the transfer of a phosphate group to glutamate to form L-glutamate 5-phosphate. In Shouchella clausii (strain KSM-K16) (Alkalihalobacillus clausii), this protein is Glutamate 5-kinase.